Reading from the N-terminus, the 80-residue chain is uncharacterized protein (80 aa).

This sequence to M.leprae U650M.

This is an uncharacterized protein from Mycobacterium bovis (strain ATCC BAA-935 / AF2122/97).